Here is a 319-residue protein sequence, read N- to C-terminus: Methionyl-tRNA formyltransferase (319 aa).

Position 116-119 (116-119 (SLLP)) interacts with (6S)-5,6,7,8-tetrahydrofolate.

Belongs to the Fmt family.

The enzyme catalyses L-methionyl-tRNA(fMet) + (6R)-10-formyltetrahydrofolate = N-formyl-L-methionyl-tRNA(fMet) + (6S)-5,6,7,8-tetrahydrofolate + H(+). Attaches a formyl group to the free amino group of methionyl-tRNA(fMet). The formyl group appears to play a dual role in the initiator identity of N-formylmethionyl-tRNA by promoting its recognition by IF2 and preventing the misappropriation of this tRNA by the elongation apparatus. The polypeptide is Methionyl-tRNA formyltransferase (Treponema pallidum (strain Nichols)).